The chain runs to 414 residues: Tryptophan synthase beta chain (414 aa).

Basic and acidic residues predominate over residues 1 to 12 (MVSTISRHDQNK). A disordered region spans residues 1–23 (MVSTISRHDQNKNNDYLNQPSKE). Residue Lys-109 is modified to N6-(pyridoxal phosphate)lysine.

It belongs to the TrpB family. Tetramer of two alpha and two beta chains. Requires pyridoxal 5'-phosphate as cofactor.

The enzyme catalyses (1S,2R)-1-C-(indol-3-yl)glycerol 3-phosphate + L-serine = D-glyceraldehyde 3-phosphate + L-tryptophan + H2O. The protein operates within amino-acid biosynthesis; L-tryptophan biosynthesis; L-tryptophan from chorismate: step 5/5. The beta subunit is responsible for the synthesis of L-tryptophan from indole and L-serine. In Prochlorococcus marinus (strain MIT 9515), this protein is Tryptophan synthase beta chain.